The primary structure comprises 640 residues: UvrABC system protein C (640 aa).

A GIY-YIG domain is found at 35-113 (DAPGVYRMIG…IKQLKPRFNV (79 aa)). Positions 223–258 (RAVMATMAKAMEEAAEELEFERAARLRDRIRALSAV) constitute a UVR domain.

It belongs to the UvrC family. As to quaternary structure, interacts with UvrB in an incision complex.

The protein localises to the cytoplasm. Functionally, the UvrABC repair system catalyzes the recognition and processing of DNA lesions. UvrC both incises the 5' and 3' sides of the lesion. The N-terminal half is responsible for the 3' incision and the C-terminal half is responsible for the 5' incision. This chain is UvrABC system protein C, found in Caulobacter vibrioides (strain ATCC 19089 / CIP 103742 / CB 15) (Caulobacter crescentus).